The following is a 351-amino-acid chain: Serine/threonine-protein kinase ZRK1 (351 aa).

Residues 60–347 (FDSSCFVSQD…KELKQIEASL (288 aa)) enclose the Protein kinase domain. ATP-binding positions include 66-74 (VSQDVYYKW) and lysine 87. Aspartate 191 functions as the Proton acceptor in the catalytic mechanism.

It belongs to the protein kinase superfamily. Ser/Thr protein kinase family. ZRK subfamily. Component of a stable high-order oligomeric complex made of RKS1 and RPP13L4/ZAR1 which recruits Xanthomonas campestris effector XopAC/AvrAC-mediated uridylylated PBL2 in the presence of ATP to form a wheel-like pentameric resistosome; this complex triggers immunity toward X.campestris in vascular tissues. Interacts with RPP13L4/ZAR1 and uridylylated PBL2. As to expression, expressed at high levels in germinating seeds and at lower levels in adult leaves.

The enzyme catalyses L-seryl-[protein] + ATP = O-phospho-L-seryl-[protein] + ADP + H(+). It catalyses the reaction L-threonyl-[protein] + ATP = O-phospho-L-threonyl-[protein] + ADP + H(+). Serine/threonine-protein kinase that confers a broad-spectrum quantitative disease resistance (QDR) to the pathogenic biotrophic bacteria Xanthomonas campestris (e.g. pv. campestris (Xcc), pv. raphani, pv. armoriaceae and pv. incanae) by restricting bacterial spread to the vascular system from the infection site; X.campestris causes black rot disease in crops. Seems to not have any kinase activity. This chain is Serine/threonine-protein kinase ZRK1, found in Arabidopsis thaliana (Mouse-ear cress).